A 464-amino-acid chain; its full sequence is Argininosuccinate lyase 2 (464 aa).

It belongs to the lyase 1 family. Argininosuccinate lyase subfamily.

The protein resides in the cytoplasm. It carries out the reaction 2-(N(omega)-L-arginino)succinate = fumarate + L-arginine. It participates in amino-acid biosynthesis; L-arginine biosynthesis; L-arginine from L-ornithine and carbamoyl phosphate: step 3/3. The protein is Argininosuccinate lyase 2 of Pseudomonas fluorescens (strain Pf0-1).